Here is a 206-residue protein sequence, read N- to C-terminus: Ribonuclease HII (206 aa).

One can recognise an RNase H type-2 domain in the interval 18–206 (LRIAGVDEVG…PVHNILYQEK (189 aa)). The a divalent metal cation site is built by Asp24, Glu25, and Asp115.

Belongs to the RNase HII family. Mn(2+) is required as a cofactor. The cofactor is Mg(2+).

It is found in the cytoplasm. It carries out the reaction Endonucleolytic cleavage to 5'-phosphomonoester.. Endonuclease that specifically degrades the RNA of RNA-DNA hybrids. The protein is Ribonuclease HII of Dinoroseobacter shibae (strain DSM 16493 / NCIMB 14021 / DFL 12).